We begin with the raw amino-acid sequence, 213 residues long: Octanoyltransferase (213 aa).

A BPL/LPL catalytic domain is found at 35-213 (DKHGDAVLLL…ERHLPTLVGA (179 aa)). Residues 73–80 (RGGKITWH), 145–147 (AIG), and 158–160 (GFS) contribute to the substrate site. The active-site Acyl-thioester intermediate is Cys176.

This sequence belongs to the LipB family.

Its subcellular location is the cytoplasm. It carries out the reaction octanoyl-[ACP] + L-lysyl-[protein] = N(6)-octanoyl-L-lysyl-[protein] + holo-[ACP] + H(+). Its pathway is protein modification; protein lipoylation via endogenous pathway; protein N(6)-(lipoyl)lysine from octanoyl-[acyl-carrier-protein]: step 1/2. Functionally, catalyzes the transfer of endogenously produced octanoic acid from octanoyl-acyl-carrier-protein onto the lipoyl domains of lipoate-dependent enzymes. Lipoyl-ACP can also act as a substrate although octanoyl-ACP is likely to be the physiological substrate. The protein is Octanoyltransferase of Salinispora arenicola (strain CNS-205).